A 275-amino-acid chain; its full sequence is Phosphate import ATP-binding protein PstB (275 aa).

In terms of domain architecture, ABC transporter spans 29-270; the sequence is VSVRDLNFYY…PTDRRTQDYI (242 aa). An ATP-binding site is contributed by 61–68; it reads GPSGCGKS.

Belongs to the ABC transporter superfamily. Phosphate importer (TC 3.A.1.7) family. The complex is composed of two ATP-binding proteins (PstB), two transmembrane proteins (PstC and PstA) and a solute-binding protein (PstS).

The protein resides in the cell inner membrane. It carries out the reaction phosphate(out) + ATP + H2O = ADP + 2 phosphate(in) + H(+). In terms of biological role, part of the ABC transporter complex PstSACB involved in phosphate import. Responsible for energy coupling to the transport system. The chain is Phosphate import ATP-binding protein PstB from Rhodopseudomonas palustris (strain BisB18).